A 339-amino-acid polypeptide reads, in one-letter code: Fructose-1,6-bisphosphatase class 1 (339 aa).

Mg(2+) is bound by residues Glu-94, Asp-116, Leu-118, and Asp-119. Substrate-binding positions include 119–122 (DGSS), Asn-210, and Lys-276. Glu-282 provides a ligand contact to Mg(2+).

Belongs to the FBPase class 1 family. In terms of assembly, homotetramer. It depends on Mg(2+) as a cofactor.

Its subcellular location is the cytoplasm. The enzyme catalyses beta-D-fructose 1,6-bisphosphate + H2O = beta-D-fructose 6-phosphate + phosphate. It participates in carbohydrate biosynthesis; gluconeogenesis. The sequence is that of Fructose-1,6-bisphosphatase class 1 from Burkholderia ambifaria (strain MC40-6).